A 423-amino-acid chain; its full sequence is AP-1 complex subunit mu-2 (423 aa).

The MHD domain maps to 168–421 (KNEVFIDVIE…ITQSGDYQLR (254 aa)).

The protein belongs to the adaptor complexes medium subunit family. In terms of assembly, adaptor protein complex 1 (AP-1) is a heterotetramer composed of two large adaptins (gamma-type subunit AP1G1 and beta-type subunit AP1B1), a medium adaptin (mu-type subunit AP1M1 or AP1M2) and a small adaptin (sigma-type subunit AP1S1 or AP1S2 or AP1S3). Interacts with P2X4. In terms of processing, phosphorylation of membrane-bound AP1M1/AP1M2 increases its affinity for sorting signals.

It localises to the golgi apparatus. The protein localises to the cytoplasmic vesicle. The protein resides in the clathrin-coated vesicle membrane. In terms of biological role, subunit of clathrin-associated adaptor protein complex 1 that plays a role in protein sorting in the trans-Golgi network (TGN) and endosomes. The AP complexes mediate the recruitment of clathrin to membranes and the recognition of sorting signals within the cytosolic tails of transmembrane cargo molecules. The sequence is that of AP-1 complex subunit mu-2 (Ap1m2) from Mus musculus (Mouse).